Here is a 412-residue protein sequence, read N- to C-terminus: Esterase EstD (412 aa).

The first 20 residues, 1 to 20 (MRLTVFLSLFLGVMVFGAFD), serve as a signal peptide directing secretion. The active-site Nucleophile is the serine 243. Active-site charge relay system residues include aspartate 347 and histidine 378.

This sequence belongs to the AB hydrolase superfamily. Esterase 10 family. As to quaternary structure, exists mainly as a monomer and, to some extent as a dimer.

It carries out the reaction a carboxylic ester + H2O = an alcohol + a carboxylate + H(+). With respect to regulation, is strongly inhibited by phenylmethylsulfonyl fluoride, a serine protease inhibitor, and by mercury chloride. Diethyl pyrocarbonate, a histidine modifier, also inhibits the reaction, albeit less pronounced than phenylmethylsulfonyl fluoride. EDTA and dithiothreitol have no effect on enzyme activity. Exhibits significant esterase activity with a preference for short acyl chain esters (C4-C8) in vitro. Its physiological function is not known. Displays neither proteolytic activity using casein as substrate, nor peptidase activity when assayed with L-leucine p-nitroanilide and L-proline p-nitroanilide. The polypeptide is Esterase EstD (Thermotoga maritima (strain ATCC 43589 / DSM 3109 / JCM 10099 / NBRC 100826 / MSB8)).